We begin with the raw amino-acid sequence, 340 residues long: Selenide, water dikinase (340 aa).

Selenocysteine 17 is an active-site residue. A non-standard amino acid (selenocysteine) is located at residue selenocysteine 17. Residues lysine 20 and 45-47 (NNE) contribute to the ATP site. Aspartate 48 contributes to the Mg(2+) binding site. ATP contacts are provided by residues aspartate 65, aspartate 88, and 136–138 (GHT). Aspartate 88 is a Mg(2+) binding site. Residue aspartate 224 coordinates Mg(2+).

Belongs to the selenophosphate synthase 1 family. Class I subfamily. As to quaternary structure, homodimer. Requires Mg(2+) as cofactor.

The catalysed reaction is hydrogenselenide + ATP + H2O = selenophosphate + AMP + phosphate + 2 H(+). Its function is as follows. Synthesizes selenophosphate from selenide and ATP. In Campylobacter jejuni (strain RM1221), this protein is Selenide, water dikinase.